Consider the following 1497-residue polypeptide: Dual oxidase 1 (1497 aa).

Positions 1–21 (MRSKHVLYIAILFSSIFGGKG) are cleaved as a signal peptide. The Extracellular segment spans residues 22–587 (IQQNEEFQRY…MQSTYWTDND (566 aa)). The segment at 26-590 (EEFQRYDGWY…TYWTDNDTTY (565 aa)) is peroxidase-like; mediates peroxidase activity. Asn66, Asn305, Asn567, and Asn586 each carry an N-linked (GlcNAc...) asparagine glycan. A helical transmembrane segment spans residues 588–608 (TTYVFTLIGLACVPLICYGIG). The Cytoplasmic portion of the chain corresponds to 609 to 986 (RYLVNRRIAI…VSAFLETYRQ (378 aa)). 2 consecutive EF-hand domains span residues 817–852 (ANNEFVKRMFAMTAKHNEDSLSFNEFLTVLREFVNA) and 853–888 (PQKQKLQTLFKMCDLEGKNKVLRKDLAELVKSLNQT). Residues 987-1007 (HVFIVFCFVAINLVLFFERFW) form a helical membrane-spanning segment. The Extracellular segment spans residues 1008 to 1024 (HYRYMAENRDLRRVMGA). Residues 1025 to 1045 (GIAITRGAAGALSFCMALILL) traverse the membrane as a helical segment. The Ferric oxidoreductase domain occupies 1030–1210 (RGAAGALSFC…FVIDRIIGLM (181 aa)). Residues 1046 to 1068 (TVCRNIITLLRETVIAQYIPFDS) are Cytoplasmic-facing. The chain crosses the membrane as a helical span at residues 1069-1089 (AIAFHKIVALFAAFWATLHTV). Residues 1090–1134 (GHCVNFYHVGTQSQEGLACLFQEAFFGSNFLPSISYWFFSTITGL) lie on the Extracellular side of the membrane. A helical transmembrane segment spans residues 1135-1155 (TGIALVAVMCIIYVFALPCFI). Topologically, residues 1156–1163 (KRAYHAFR) are cytoplasmic. Residues 1164 to 1184 (LTHLLNIAFYALTLLHGLPKL) form a helical membrane-spanning segment. At 1185 to 1189 (LDSPK) the chain is on the extracellular side. The chain crosses the membrane as a helical span at residues 1190–1210 (FGYYVVGPIVLFVIDRIIGLM). In terms of domain architecture, FAD-binding FR-type spans 1211–1318 (QYYKKLEIVN…KGPYGDGNQE (108 aa)). At 1211 to 1497 (QYYKKLEIVN…PSFAHRFETF (287 aa)) the chain is on the cytoplasmic side.

It in the N-terminal section; belongs to the peroxidase family. In terms of assembly, interacts with doxa-1 and tsp-15. Interacts with rho-1. As to expression, expressed in hypodermal cells.

The protein localises to the membrane. It carries out the reaction NADH + O2 + H(+) = H2O2 + NAD(+). The enzyme catalyses NADPH + O2 + H(+) = H2O2 + NADP(+). Peroxidase activity is inhibited by aminobenzohydrazide. In terms of biological role, plays a role in cuticle biogenesis. In complex with doxa-1 and tsp-15, produces reactive oxygen species (ROS), which are probably used by mlt-7 for tyrosine cross-linking, thus stabilizing cuticular extracellular matrix. May regulate the production of ROS by playing a role in modulating proline catabolism. Required in combination with mlt-7 for correct formation of cross-links in cuticle collagens. Association with the GTPase rho-1 promotes ROS production and this interaction may be modulated by memo-1, in order to control the oxidative stress response and longevity. This is Dual oxidase 1 from Caenorhabditis elegans.